Reading from the N-terminus, the 114-residue chain is T cell receptor beta variable 25-1 (114 aa).

The signal sequence occupies residues 1–21 (MTIRLLCYVGFYFLGAGLMEA). One can recognise an Ig-like domain in the interval 22-114 (DIYQTPRYLV…TSQYLCASSE (93 aa)). C42 and C110 are joined by a disulfide. The N-linked (GlcNAc...) asparagine glycan is linked to N72.

As to quaternary structure, alpha-beta TR is a heterodimer composed of an alpha and beta chain; disulfide-linked. The alpha-beta TR is associated with the transmembrane signaling CD3 coreceptor proteins to form the TR-CD3 (TcR or TCR). The assembly of alpha-beta TR heterodimers with CD3 occurs in the endoplasmic reticulum where a single alpha-beta TR heterodimer associates with one CD3D-CD3E heterodimer, one CD3G-CD3E heterodimer and one CD247 homodimer forming a stable octameric structure. CD3D-CD3E and CD3G-CD3E heterodimers preferentially associate with TR alpha and TR beta chains, respectively. The association of the CD247 homodimer is the last step of TcR assembly in the endoplasmic reticulum and is required for transport to the cell surface.

It localises to the cell membrane. Functionally, v region of the variable domain of T cell receptor (TR) beta chain that participates in the antigen recognition. Alpha-beta T cell receptors are antigen specific receptors which are essential to the immune response and are present on the cell surface of T lymphocytes. Recognize peptide-major histocompatibility (MH) (pMH) complexes that are displayed by antigen presenting cells (APC), a prerequisite for efficient T cell adaptive immunity against pathogens. Binding of alpha-beta TR to pMH complex initiates TR-CD3 clustering on the cell surface and intracellular activation of LCK that phosphorylates the ITAM motifs of CD3G, CD3D, CD3E and CD247 enabling the recruitment of ZAP70. In turn ZAP70 phosphorylates LAT, which recruits numerous signaling molecules to form the LAT signalosome. The LAT signalosome propagates signal branching to three major signaling pathways, the calcium, the mitogen-activated protein kinase (MAPK) kinase and the nuclear factor NF-kappa-B (NF-kB) pathways, leading to the mobilization of transcription factors that are critical for gene expression and essential for T cell growth and differentiation. The T cell repertoire is generated in the thymus, by V-(D)-J rearrangement. This repertoire is then shaped by intrathymic selection events to generate a peripheral T cell pool of self-MH restricted, non-autoaggressive T cells. Post-thymic interaction of alpha-beta TR with the pMH complexes shapes TR structural and functional avidity. This is T cell receptor beta variable 25-1 from Homo sapiens (Human).